The primary structure comprises 446 residues: Methionine aminopeptidase 2-1 (446 aa).

The disordered stretch occupies residues 1 to 88; that stretch reads MAAQVTPELA…PPRVILSSIF (88 aa). The segment covering 32–44 has biased composition (acidic residues); the sequence is ENEDVESDDDNEG. Positions 57–72 are enriched in basic residues; that stretch reads AKKKKKKKPKKKKKGG. His-196 serves as a coordination point for substrate. The a divalent metal cation site is built by Asp-216, Asp-227, and His-296. His-304 serves as a coordination point for substrate. A divalent metal cation contacts are provided by Glu-332 and Glu-427.

This sequence belongs to the peptidase M24A family. Methionine aminopeptidase eukaryotic type 2 subfamily. Co(2+) serves as cofactor. It depends on Zn(2+) as a cofactor. Requires Mn(2+) as cofactor. The cofactor is Fe(2+).

It is found in the cytoplasm. It carries out the reaction Release of N-terminal amino acids, preferentially methionine, from peptides and arylamides.. In terms of biological role, cotranslationally removes the N-terminal methionine from nascent proteins. The N-terminal methionine is often cleaved when the second residue in the primary sequence is small and uncharged (Met-Ala-, Cys, Gly, Pro, Ser, Thr, or Val). The sequence is that of Methionine aminopeptidase 2-1 from Blastomyces gilchristii (strain SLH14081) (Blastomyces dermatitidis).